The primary structure comprises 234 residues: Orotidine 5'-phosphate decarboxylase (234 aa).

Substrate-binding positions include aspartate 10, lysine 31, 58-67 (DLKLHDIPNT), threonine 121, arginine 183, glutamine 192, glycine 212, and arginine 213. The Proton donor role is filled by lysine 60.

Belongs to the OMP decarboxylase family. Type 1 subfamily. As to quaternary structure, homodimer.

The catalysed reaction is orotidine 5'-phosphate + H(+) = UMP + CO2. Its pathway is pyrimidine metabolism; UMP biosynthesis via de novo pathway; UMP from orotate: step 2/2. In terms of biological role, catalyzes the decarboxylation of orotidine 5'-monophosphate (OMP) to uridine 5'-monophosphate (UMP). The sequence is that of Orotidine 5'-phosphate decarboxylase from Halalkalibacterium halodurans (strain ATCC BAA-125 / DSM 18197 / FERM 7344 / JCM 9153 / C-125) (Bacillus halodurans).